We begin with the raw amino-acid sequence, 119 residues long: Ribonuclease P protein component (119 aa).

This sequence belongs to the RnpA family. Consists of a catalytic RNA component (M1 or rnpB) and a protein subunit.

The enzyme catalyses Endonucleolytic cleavage of RNA, removing 5'-extranucleotides from tRNA precursor.. Functionally, RNaseP catalyzes the removal of the 5'-leader sequence from pre-tRNA to produce the mature 5'-terminus. It can also cleave other RNA substrates such as 4.5S RNA. The protein component plays an auxiliary but essential role in vivo by binding to the 5'-leader sequence and broadening the substrate specificity of the ribozyme. The protein is Ribonuclease P protein component of Escherichia coli O6:H1 (strain CFT073 / ATCC 700928 / UPEC).